A 244-amino-acid chain; its full sequence is Large ribosomal subunit protein uL2 (244 aa).

2 stretches are compositionally biased toward basic residues: residues 1-12 (MGKRPLVRRRGR) and 234-244 (KTGRARIKERK). Disordered stretches follow at residues 1 to 30 (MGKR…TKAN) and 203 to 244 (HGGG…KERK).

The protein belongs to the universal ribosomal protein uL2 family. Part of the 50S ribosomal subunit. Forms a bridge to the 30S subunit in the 70S ribosome.

In terms of biological role, one of the primary rRNA binding proteins. Required for association of the 30S and 50S subunits to form the 70S ribosome, for tRNA binding and peptide bond formation. It has been suggested to have peptidyltransferase activity; this is somewhat controversial. Makes several contacts with the 16S rRNA in the 70S ribosome. The chain is Large ribosomal subunit protein uL2 from Nitrosopumilus maritimus (strain SCM1).